The following is a 242-amino-acid chain: E3 ubiquitin-protein ligase ZNRF2 (242 aa).

The disordered stretch occupies residues 1–141; it reads MGAKQSGPAA…VGGSPGGPRL (141 aa). Residue G2 is the site of N-myristoyl glycine attachment. A phosphoserine mark is found at S19, S21, and S25. Residues 19-29 show a composition bias toward low complexity; sequence SGSDLPSSSSG. Residues 30 to 41 are compositionally biased toward gly residues; sequence GANGTAGGGGGA. The span at 59 to 97 shows a compositional bias: low complexity; the sequence is PSASGGAAAAAAAPAAPAAPRSRSLGGAVGSVASGARAA. 5 positions are modified to phosphoserine: S82, S89, S113, S116, and S135. Residues 99–118 are compositionally biased toward polar residues; the sequence is SPFSIPNSSSGPYGSQDSVH. Phosphoserine; by MTOR is present on S145. A phosphoserine mark is found at S151 and S193. The RING-type; atypical zinc-finger motif lies at 199-240; sequence CAICLEELQQGDTIARLPCLCIYHKGCIDEWFEVNRSCPEHP.

Interacts with UBE2N. Interacts with ZNRF1. Interacts (when phosphorylated) with YWHAE. Post-translationally, phosphorylated; leading to binding to YWHAE. Phosphorylated by MTOR at Ser-145 and dephosphorylated by PP6C. Ser-145 phosphorylation stimulates vesicle-to-cytosol translocation. Highly expressed in the brain, with higher expression during development than in adult. Expressed also in mammary glands, testis, colon and kidney.

The protein localises to the endosome membrane. It is found in the lysosome membrane. It localises to the presynaptic cell membrane. The protein resides in the cytoplasm. The enzyme catalyses S-ubiquitinyl-[E2 ubiquitin-conjugating enzyme]-L-cysteine + [acceptor protein]-L-lysine = [E2 ubiquitin-conjugating enzyme]-L-cysteine + N(6)-ubiquitinyl-[acceptor protein]-L-lysine.. Its pathway is protein modification; protein ubiquitination. E3 ubiquitin-protein ligase that plays a role in the establishment and maintenance of neuronal transmission and plasticity. Ubiquitinates the Na(+)/K(+) ATPase alpha-1 subunit/ATP1A1 and thereby influences its endocytosis and/or degradation. Acts also as a positive regulator of mTORC1 activation by amino acids, which functions upstream of the V-ATPase and of Rag-GTPases. In turn, phosphorylation by mTOR leads to its inhibition via targeting to the cytosol allowing a self-regulating feedback mechanism. This chain is E3 ubiquitin-protein ligase ZNRF2 (ZNRF2), found in Homo sapiens (Human).